The sequence spans 269 residues: 4-hydroxy-tetrahydrodipicolinate reductase (269 aa).

NAD(+) contacts are provided by residues 9-14 and glutamate 35; that span reads GAGGRM. An NADP(+)-binding site is contributed by arginine 36. Residues 98-100 and 122-125 contribute to the NAD(+) site; these read GTT and ASNY. Histidine 155 serves as the catalytic Proton donor/acceptor. A (S)-2,3,4,5-tetrahydrodipicolinate-binding site is contributed by histidine 156. Lysine 159 (proton donor) is an active-site residue. 165–166 provides a ligand contact to (S)-2,3,4,5-tetrahydrodipicolinate; the sequence is GT.

It belongs to the DapB family.

It localises to the cytoplasm. It carries out the reaction (S)-2,3,4,5-tetrahydrodipicolinate + NAD(+) + H2O = (2S,4S)-4-hydroxy-2,3,4,5-tetrahydrodipicolinate + NADH + H(+). The catalysed reaction is (S)-2,3,4,5-tetrahydrodipicolinate + NADP(+) + H2O = (2S,4S)-4-hydroxy-2,3,4,5-tetrahydrodipicolinate + NADPH + H(+). The protein operates within amino-acid biosynthesis; L-lysine biosynthesis via DAP pathway; (S)-tetrahydrodipicolinate from L-aspartate: step 4/4. Functionally, catalyzes the conversion of 4-hydroxy-tetrahydrodipicolinate (HTPA) to tetrahydrodipicolinate. The chain is 4-hydroxy-tetrahydrodipicolinate reductase from Actinobacillus pleuropneumoniae serotype 7 (strain AP76).